Reading from the N-terminus, the 605-residue chain is Alpha-1,3-galactosidase A (605 aa).

Residues 1-20 (MKKYLHILPACFLFYAAAHA) form the signal peptide. 6 PbH1 repeats span residues 256–278 (SKNI…VSQY), 312–334 (KGKV…NVHG), 421–443 (TPEV…LVTT), 444–466 (PRKV…LIEA), 477–507 (VKDV…HPSN), and 517–547 (HQNI…LFRN).

It belongs to the glycosyl hydrolase 110 family. A subfamily.

It catalyses the reaction Hydrolysis of terminal, non-reducing branched (1-&gt;3)-alpha-D-galactosidic residues, producing free D-galactose.. The catalysed reaction is Hydrolysis of terminal, non-reducing alpha-D-galactose residues in alpha-D-galactosides, including galactose oligosaccharides, galactomannans and galactolipids.. In terms of biological role, alpha-galactosidase that specifically removes branched alpha-1,3-linked galactose residues present in blood group B antigens. Has no activity toward linear alpha-1,3-linked galactose residues. The sequence is that of Alpha-1,3-galactosidase A (glaA) from Bacteroides fragilis (strain ATCC 25285 / DSM 2151 / CCUG 4856 / JCM 11019 / LMG 10263 / NCTC 9343 / Onslow / VPI 2553 / EN-2).